Reading from the N-terminus, the 466-residue chain is MPHSYDYDAIVIGSGPGGEGAAMGLVKQGARVAVIERYQNVGGGCTHWGTIPSKALRHAVSRIIEFNQNPLYSDHSRLLRSSFADILNHADNVINQQTRMRQGFYERNHCEILQGNARFVDEHTLALDCPDGSVETLTAEKFVIACGSRPYHPTDVDFTHPRIYDSDSILSMHHEPRHVLIYGAGVIGCEYASIFRGMDVKVDLINTRDRLLAFLDQEMSDSLSYHFWNSGVVIRHNEEYEKIEGCDDGVIMHLKSGKKLKADCLLYANGRTGNTDSLALQNIGLETDSRGQLKVNSMYQTAQPHVYAVGDVIGYPSLASAAYDQGRIAAQALVKGEATAHLIEDIPTGIYTIPEISSVGKTEQQLTAMKVPYEVGRAQFKHLARAQIVGMNVGTLKILFHRETKEILGIHCFGERAAEIIHIGQAIMEQKGGGNTIEYFVNTTFNYPTMAEAYRVAALNGLNRLF.

36–45 is an FAD binding site; it reads ERYQNVGGGC.

The protein belongs to the class-I pyridine nucleotide-disulfide oxidoreductase family. Requires FAD as cofactor.

The protein localises to the cytoplasm. It catalyses the reaction NAD(+) + NADPH = NADH + NADP(+). Its function is as follows. Conversion of NADPH, generated by peripheral catabolic pathways, to NADH, which can enter the respiratory chain for energy generation. In Escherichia fergusonii (strain ATCC 35469 / DSM 13698 / CCUG 18766 / IAM 14443 / JCM 21226 / LMG 7866 / NBRC 102419 / NCTC 12128 / CDC 0568-73), this protein is Soluble pyridine nucleotide transhydrogenase.